Reading from the N-terminus, the 910-residue chain is DNA mismatch repair protein MutS (910 aa).

658-665 (GPNMGGKS) contacts ATP.

It belongs to the DNA mismatch repair MutS family.

In terms of biological role, this protein is involved in the repair of mismatches in DNA. It is possible that it carries out the mismatch recognition step. This protein has a weak ATPase activity. The polypeptide is DNA mismatch repair protein MutS (Brucella anthropi (strain ATCC 49188 / DSM 6882 / CCUG 24695 / JCM 21032 / LMG 3331 / NBRC 15819 / NCTC 12168 / Alc 37) (Ochrobactrum anthropi)).